The chain runs to 954 residues: MTELLQSLSTQNEFVARHNGPNKSDQQKMLEAINAVSLDSLIDETVPAQIRLEQPMNLAEAKSEADMLAAMRKFADQNQIKRTFIGQGYYNTFTPNVILRNVMENPGWYTAYTPYQPEISQGRLESLLNYQQMVMDLTGMEIANASLLDEATAAAEAMTLCKRAGKSKSNVFFVADDVHPQTIEVVKTRAKFIGFEVLVGALDSLPEQDVFGALVQYPGTTGEVRDLTDLIAKAQANKTLVTVATDLLASALLKPAGEMGADVAIGSAQRFGVPMGYGGPHAAFMATRDKHKRTMPGRVIGVSIDTNGNQALRMAMQTREQHIRREKATSNICTAQALLANMASFYAVFHGAEGLRTIARRTHHMTAILAAGLTKGGFELAHNSFFDTITINTGAQTEDLYAKALAADINLRKLGTQLGVSFDETTTVADVEALFAVFGVKEEVAALSTEIAGNEFAAIPEALRRTTEYLTHPVFNTHHSETQMMRYLKQLENKDFSLTHGMIPLGSCTMKLNAAAEMIPVTWPEFGSIHPFAPADQAAGYAALAKDLKEKLCEITGYDAFSLQPNSGASGEYAGLIAIQRYHESRGEGHRNVCLIPSSAHGTNPATASMVSMKVVVVKCDEEGNIDVTDLAAKIKKHKDNLSSIMITYPSTHGVYEEQVKEVCEMVHAAGGQVYLDGANMNAQVGLTTPGFIGSDVSHLNLHKTFCIPHGGGGPGMGPIGVKSHLAPFLPGHIENGADGENFAVSAADMGSASILPISWAYIAMMGEAGLTDATKVAILNANYVMEQLRPHYPVLYRGSNGRVAHECIIDIRPLKEETGISEEDIAKRLMDYGFHAPTMSFPVAGTLMVEPTESEDLEELDRFCDAMIAIREEMTKVKNGEWPLDNNPLVNAPHTQFDLAKEEWDRPYSRELGCFPSKATKSWKYWPTVNRVDNVYGDRNLICSCPSIDNYED.

Over residues 1 to 13 (MTELLQSLSTQNE) the composition is skewed to polar residues. The interval 1 to 24 (MTELLQSLSTQNEFVARHNGPNKS) is disordered. K704 is modified (N6-(pyridoxal phosphate)lysine).

Belongs to the GcvP family. In terms of assembly, the glycine cleavage system is composed of four proteins: P, T, L and H. The cofactor is pyridoxal 5'-phosphate.

The catalysed reaction is N(6)-[(R)-lipoyl]-L-lysyl-[glycine-cleavage complex H protein] + glycine + H(+) = N(6)-[(R)-S(8)-aminomethyldihydrolipoyl]-L-lysyl-[glycine-cleavage complex H protein] + CO2. In terms of biological role, the glycine cleavage system catalyzes the degradation of glycine. The P protein binds the alpha-amino group of glycine through its pyridoxal phosphate cofactor; CO(2) is released and the remaining methylamine moiety is then transferred to the lipoamide cofactor of the H protein. This Vibrio campbellii (strain ATCC BAA-1116) protein is Glycine dehydrogenase (decarboxylating).